We begin with the raw amino-acid sequence, 581 residues long: MSKLKNLNREFISNLKSHKLITDAKRNLILSILKSTTTKREARNYLNKYQNQFDFGDLKISSSAKYEQDVSKLTKRDSQRELFVNRYLNKQNPFINIYDDETKLKKIPLRVALFKLKFLNIDPKEWRGIAETFKRLVNLGISPIVFLDYDHLPTDSFKYNELYMINQVNKVMNYLGKPEEEGNLKTTVLRSLFTVENKERGPVINSLESILIPLYQGIIPFIQPIIYNAESTFQQFINSNQLLYSLCESLLDKKDLLSVEKIVMIDPIGGIPSVERNQTSHVFINLSQEYSDIVSELYIGHIEPDQRDLHLANLNTMHEILTLASSKSGNDDTTGIITTPFIMSVNDDLINPIIYNVLTDRPIISSSLPSSNNRTPQLSTSILKKGVDVRSYDADNYARKFTLHNLIEDELVDKNRLVALLDDSFGKNLDTDSYFDRINNSLATLVIVGDYDGAAIITWEYSGTNKIAYLDKFAIAKKNQGLPGLADVIFKIILSSHPHELIWRSRKVNPVNKWYFERCVGSMSSPESQWRIFYTGDIFNRRIDKRRKRIVGSEAVNISDKLVQYSEICEGIPPSFFSSKE.

The 158-residue stretch at 401-558 (FTLHNLIEDE…RIVGSEAVNI (158 aa)) folds into the N-acetyltransferase domain.

This sequence belongs to the acetyltransferase family.

It is found in the mitochondrion. It carries out the reaction L-glutamate + acetyl-CoA = N-acetyl-L-glutamate + CoA + H(+). It participates in amino-acid biosynthesis; L-arginine biosynthesis; N(2)-acetyl-L-ornithine from L-glutamate: step 1/4. Its function is as follows. N-acetylglutamate synthase involved in arginine biosynthesis. The sequence is that of Amino-acid acetyltransferase, mitochondrial (ARG2) from Scheffersomyces stipitis (strain ATCC 58785 / CBS 6054 / NBRC 10063 / NRRL Y-11545) (Yeast).